Here is a 189-residue protein sequence, read N- to C-terminus: 7-methyl-GTP pyrophosphatase (189 aa).

The Proton acceptor role is filled by D71.

This sequence belongs to the Maf family. YceF subfamily. Requires a divalent metal cation as cofactor.

It is found in the cytoplasm. It catalyses the reaction N(7)-methyl-GTP + H2O = N(7)-methyl-GMP + diphosphate + H(+). Nucleoside triphosphate pyrophosphatase that hydrolyzes 7-methyl-GTP (m(7)GTP). May have a dual role in cell division arrest and in preventing the incorporation of modified nucleotides into cellular nucleic acids. The chain is 7-methyl-GTP pyrophosphatase from Bdellovibrio bacteriovorus (strain ATCC 15356 / DSM 50701 / NCIMB 9529 / HD100).